The following is a 130-amino-acid chain: Protein ApaG (130 aa).

The ApaG domain occupies 3 to 127; the sequence is RALTRDIEVT…FSLDSPGLVR (125 aa).

In Sinorhizobium fredii (strain NBRC 101917 / NGR234), this protein is Protein ApaG.